The primary structure comprises 195 residues: Interferon tau-11 (195 aa).

Residues 1–23 (MAFVLSLLMALVLVSYGPGGSLG) form the signal peptide. Disulfide bonds link Cys-24–Cys-122 and Cys-52–Cys-162. N-linked (GlcNAc...) asparagine glycosylation occurs at Asn-101.

Belongs to the alpha/beta interferon family. IFN-alphaII subfamily. In terms of tissue distribution, constitutively and exclusively expressed in the mononuclear cells of the extraembryonic trophectoderm.

Its subcellular location is the secreted. Functionally, paracrine hormone primarily responsible for maternal recognition of pregnancy. Interacts with endometrial receptors, probably type I interferon receptors, and blocks estrogen receptor expression, preventing the estrogen-induced increase in oxytocin receptor expression in the endometrium. This results in the suppression of the pulsatile endometrial release of the luteolytic hormone prostaglandin F2-alpha, hindering the regression of the corpus luteum (luteolysis) and therefore a return to ovarian cyclicity. This, and a possible direct effect of IFN-tau on prostaglandin synthesis, leads in turn to continued ovarian progesterone secretion, which stimulates the secretion by the endometrium of the nutrients required for the growth of the conceptus. In summary, displays particularly high antiviral and antiproliferative potency concurrently with particular weak cytotoxicity, high antiluteolytic activity and immunomodulatory properties. In contrast with other IFNs, IFN-tau is not virally inducible. This Ovis aries (Sheep) protein is Interferon tau-11 (IFNT11).